A 237-amino-acid chain; its full sequence is Orotidine 5'-phosphate decarboxylase (237 aa).

Substrate contacts are provided by residues D10, K33, D60–T69, T123, R185, Q194, G214, and R215. K62 functions as the Proton donor in the catalytic mechanism.

This sequence belongs to the OMP decarboxylase family. Type 1 subfamily. Homodimer.

The catalysed reaction is orotidine 5'-phosphate + H(+) = UMP + CO2. It functions in the pathway pyrimidine metabolism; UMP biosynthesis via de novo pathway; UMP from orotate: step 2/2. Functionally, catalyzes the decarboxylation of orotidine 5'-monophosphate (OMP) to uridine 5'-monophosphate (UMP). This Enterococcus faecalis (strain ATCC 700802 / V583) protein is Orotidine 5'-phosphate decarboxylase.